A 78-amino-acid chain; its full sequence is UPF0154 protein lp_2061 (78 aa).

The chain crosses the membrane as a helical span at residues 5–27 (TGIWILIVVIGVLVGLTGGFFGA).

This sequence belongs to the UPF0154 family.

Its subcellular location is the membrane. This Lactiplantibacillus plantarum (strain ATCC BAA-793 / NCIMB 8826 / WCFS1) (Lactobacillus plantarum) protein is UPF0154 protein lp_2061.